The primary structure comprises 176 residues: Oleosin Ara h 14.0101 (176 aa).

Alanine 2 bears the N-acetylalanine; alternate mark. Transmembrane regions (helical) follow at residues 50–80 (IIAV…GLAI) and 95–117 (AVVT…LTGL). The segment at 157-176 (TKDAGQQIQTKAQDVKRSSS) is disordered.

It belongs to the oleosin family. As to quaternary structure, homodimer. Forms oligomers. As to expression, expressed in seeds (at protein level). Not expressed in leaves.

The protein resides in the lipid droplet. The protein localises to the membrane. May have a structural role to stabilize the lipid body during desiccation of the seed by preventing coalescence of the oil. Probably interacts with both lipid and phospholipid moieties of lipid bodies. May also provide recognition signals for specific lipase anchorage in lipolysis during seedling growth. In Arachis hypogaea (Peanut), this protein is Oleosin Ara h 14.0101.